A 317-amino-acid chain; its full sequence is Acetyl-coenzyme A carboxylase carboxyl transferase subunit alpha (317 aa).

The 256-residue stretch at 37-292 folds into the CoA carboxyltransferase C-terminal domain; sequence EINKKLEQTK…ADYITKGYNE (256 aa).

It belongs to the AccA family. In terms of assembly, acetyl-CoA carboxylase is a heterohexamer composed of biotin carboxyl carrier protein (AccB), biotin carboxylase (AccC) and two subunits each of ACCase subunit alpha (AccA) and ACCase subunit beta (AccD).

The protein localises to the cytoplasm. The catalysed reaction is N(6)-carboxybiotinyl-L-lysyl-[protein] + acetyl-CoA = N(6)-biotinyl-L-lysyl-[protein] + malonyl-CoA. It participates in lipid metabolism; malonyl-CoA biosynthesis; malonyl-CoA from acetyl-CoA: step 1/1. Its function is as follows. Component of the acetyl coenzyme A carboxylase (ACC) complex. First, biotin carboxylase catalyzes the carboxylation of biotin on its carrier protein (BCCP) and then the CO(2) group is transferred by the carboxyltransferase to acetyl-CoA to form malonyl-CoA. The polypeptide is Acetyl-coenzyme A carboxylase carboxyl transferase subunit alpha (Flavobacterium johnsoniae (strain ATCC 17061 / DSM 2064 / JCM 8514 / BCRC 14874 / CCUG 350202 / NBRC 14942 / NCIMB 11054 / UW101) (Cytophaga johnsonae)).